Here is a 169-residue protein sequence, read N- to C-terminus: X polypeptide (169 aa).

Belongs to the IagB/IpgF/P19 family.

The sequence is that of X polypeptide (X) from Escherichia coli.